The chain runs to 344 residues: L-rhamnose-proton symporter (344 aa).

The next 10 membrane-spanning stretches (helical) occupy residues Ala-4 to Ala-24, Trp-38 to Leu-58, Phe-68 to Ile-88, Met-101 to Ile-121, Thr-137 to Leu-157, Leu-175 to Ala-195, Leu-214 to Val-234, Ile-259 to Gly-279, Ile-290 to Leu-310, and Val-323 to Ala-343.

Belongs to the L-rhamnose transporter (TC 2.A.7.6) family.

It localises to the cell inner membrane. The enzyme catalyses L-rhamnopyranose(in) + H(+)(in) = L-rhamnopyranose(out) + H(+)(out). In terms of biological role, uptake of L-rhamnose across the cytoplasmic membrane with the concomitant transport of protons into the cell (symport system). The sequence is that of L-rhamnose-proton symporter from Citrobacter koseri (strain ATCC BAA-895 / CDC 4225-83 / SGSC4696).